A 265-amino-acid chain; its full sequence is MTYKAQYTPGETQIAENRRKHMDPDYEFRKLREVSDEDLVKVLGHRNPGESYKSVHPPLDEMDFEEDIVRDMVEPIQGAKEGVRVRYIQFADSMYNAPAQPYDRARTYMWRYRGVDTGTLSGRQVIEMRELDLEGVSKELVETELFDPATTGIRGATVHGHSLRLDENGLMFDALQRYVFDEEKGHVVYVKDQVGRPLDEPVDMGQPLGEDELKKITTIYRKDNIAMRDDKEAIEVVENIHTGRTMGGFGMDVFKDDLRKRLGDD.

R123 is a coenzyme M binding site.

This sequence belongs to the methyl-coenzyme M reductase gamma subunit family. As to quaternary structure, MCR is a hexamer of two alpha, two beta, and two gamma chains, forming a dimer of heterotrimers. Coenzyme F430 is required as a cofactor.

It carries out the reaction coenzyme B + methyl-coenzyme M = methane + coenzyme M-coenzyme B heterodisulfide. It functions in the pathway one-carbon metabolism; methyl-coenzyme M reduction; methane from methyl-coenzyme M: step 1/1. Functionally, component of the methyl-coenzyme M reductase (MCR) I that catalyzes the reductive cleavage of methyl-coenzyme M (CoM-S-CH3 or 2-(methylthio)ethanesulfonate) using coenzyme B (CoB or 7-mercaptoheptanoylthreonine phosphate) as reductant which results in the production of methane and the mixed heterodisulfide of CoB and CoM (CoM-S-S-CoB). This is the final step in methanogenesis. In Methanothermobacter thermautotrophicus (strain ATCC 29096 / DSM 1053 / JCM 10044 / NBRC 100330 / Delta H) (Methanobacterium thermoautotrophicum), this protein is Methyl-coenzyme M reductase II subunit gamma (mrtG).